Here is a 230-residue protein sequence, read N- to C-terminus: Large ribosomal subunit protein uL1 (230 aa).

The protein belongs to the universal ribosomal protein uL1 family. Part of the 50S ribosomal subunit.

In terms of biological role, binds directly to 23S rRNA. The L1 stalk is quite mobile in the ribosome, and is involved in E site tRNA release. Protein L1 is also a translational repressor protein, it controls the translation of the L11 operon by binding to its mRNA. The chain is Large ribosomal subunit protein uL1 from Bradyrhizobium sp. (strain ORS 278).